Consider the following 32-residue polypeptide: Cytochrome b6-f complex subunit 7 (32 aa).

A helical membrane pass occupies residues 5-25 (IFTVAGVMWALVLTGLSVGFG).

It belongs to the PetM family. As to quaternary structure, the 4 large subunits of the cytochrome b6-f complex are cytochrome b6, subunit IV (17 kDa polypeptide, PetD), cytochrome f and the Rieske protein, while the 4 small subunits are PetG, PetL, PetM and PetN. The complex functions as a dimer.

Its subcellular location is the plastid. The protein resides in the chloroplast thylakoid membrane. Its function is as follows. Component of the cytochrome b6-f complex, which mediates electron transfer between photosystem II (PSII) and photosystem I (PSI), cyclic electron flow around PSI, and state transitions. The sequence is that of Cytochrome b6-f complex subunit 7 from Emiliania huxleyi (Coccolithophore).